A 224-amino-acid chain; its full sequence is V-type proton ATPase subunit S1-like protein (224 aa).

A helical membrane pass occupies residues P147–L167.

Belongs to the vacuolar ATPase subunit S1 family.

It is found in the membrane. The chain is V-type proton ATPase subunit S1-like protein (ATP6AP1L) from Homo sapiens (Human).